We begin with the raw amino-acid sequence, 168 residues long: Endoribonuclease YbeY (168 aa).

Zn(2+)-binding residues include His-123, His-127, and His-133.

The protein belongs to the endoribonuclease YbeY family. It depends on Zn(2+) as a cofactor.

It is found in the cytoplasm. Its function is as follows. Single strand-specific metallo-endoribonuclease involved in late-stage 70S ribosome quality control and in maturation of the 3' terminus of the 16S rRNA. This is Endoribonuclease YbeY from Francisella tularensis subsp. tularensis (strain SCHU S4 / Schu 4).